Here is a 383-residue protein sequence, read N- to C-terminus: S-adenosylmethionine synthase (383 aa).

His-22 contacts ATP. Asp-24 contributes to the Mg(2+) binding site. Glu-50 lines the K(+) pocket. Glu-63 and Gln-99 together coordinate L-methionine. A flexible loop region spans residues Gln-99 to Lys-109. ATP contacts are provided by residues Asp-160 to Lys-162, Asp-235, Arg-241 to Lys-242, Ser-258, and Lys-262. Asp-235 is a binding site for L-methionine. An L-methionine-binding site is contributed by Lys-266.

It belongs to the AdoMet synthase family. Homotetramer; dimer of dimers. Mg(2+) serves as cofactor. K(+) is required as a cofactor.

The protein localises to the cytoplasm. It catalyses the reaction L-methionine + ATP + H2O = S-adenosyl-L-methionine + phosphate + diphosphate. The protein operates within amino-acid biosynthesis; S-adenosyl-L-methionine biosynthesis; S-adenosyl-L-methionine from L-methionine: step 1/1. Its function is as follows. Catalyzes the formation of S-adenosylmethionine (AdoMet) from methionine and ATP. The overall synthetic reaction is composed of two sequential steps, AdoMet formation and the subsequent tripolyphosphate hydrolysis which occurs prior to release of AdoMet from the enzyme. The protein is S-adenosylmethionine synthase of Mycoplasma genitalium (strain ATCC 33530 / DSM 19775 / NCTC 10195 / G37) (Mycoplasmoides genitalium).